Here is a 330-residue protein sequence, read N- to C-terminus: Phenylalanine--tRNA ligase alpha subunit (330 aa).

Glutamate 257 provides a ligand contact to Mg(2+).

It belongs to the class-II aminoacyl-tRNA synthetase family. Phe-tRNA synthetase alpha subunit type 1 subfamily. As to quaternary structure, tetramer of two alpha and two beta subunits. Mg(2+) is required as a cofactor.

The protein localises to the cytoplasm. It carries out the reaction tRNA(Phe) + L-phenylalanine + ATP = L-phenylalanyl-tRNA(Phe) + AMP + diphosphate + H(+). This Nostoc punctiforme (strain ATCC 29133 / PCC 73102) protein is Phenylalanine--tRNA ligase alpha subunit.